The sequence spans 26 residues: Neprilysin (26 aa).

Belongs to the peptidase M13 family. It depends on Zn(2+) as a cofactor.

The protein localises to the cell membrane. It catalyses the reaction Preferential cleavage of polypeptides between hydrophobic residues, particularly with Phe or Tyr at P1'.. The enzyme catalyses substance P + H2O = substance P(1-9) + L-Leu-L-Met-NH2. The catalysed reaction is substance P + H2O = substance P(1-7) + L-Phe-Gly-L-Leu-L-Met-NH2. It carries out the reaction neurotensin + H2O = neurotensin(1-11) + L-isoleucyl-L-leucine. It catalyses the reaction neurotensin + H2O = neurotensin(1-10) + L-tyrosyl-L-isoleucyl-L-leucine. Its function is as follows. Thermolysin-like specificity, but is almost confined on acting on polypeptides of up to 30 amino acids. Biologically important in the destruction of opioid peptides such as Met- and Leu-enkephalins by cleavage of a Gly-Phe bond. Catalyzes cleavage of bradykinin, substance P and neurotensin peptides. Able to cleave angiotensin-1, angiotensin-2 and angiotensin 1-9. Involved in the degradation of atrial natriuretic factor (ANF) and brain natriuretic factor (BNP(1-32)). Displays UV-inducible elastase activity toward skin preelastic and elastic fibers. This Sus scrofa (Pig) protein is Neprilysin (MME).